Consider the following 533-residue polypeptide: Adenine deaminase (533 aa).

This sequence belongs to the metallo-dependent hydrolases superfamily. Adenine deaminase family. Requires Mn(2+) as cofactor.

The enzyme catalyses adenine + H2O + H(+) = hypoxanthine + NH4(+). The chain is Adenine deaminase from Sulfurovum sp. (strain NBC37-1).